The primary structure comprises 542 residues: MNGKRPAEPGPARVGKKRKKEVMAEFSDAVTEETLKKQVAEAWSRRTPFSHEVIVMDMDPFLHCVIPNFIQSQDFLEGLQKELMNLDFHEKYNDLYKFQQSDDLKKRREPHISALRKILFEDFRSWLSDISKIDLESTIDMSCAKYEFTDALLCHDDELEGRRIAFILYLVPPWDRSLGGTLDLYSIDEHFQPKQIVKSLIPSWNKLVFFEVSPVSFHQVSEVLSEEKSRLSISGWFHGPSLTRPPNHFEPPIPRSPHIPQDHEILYDWINPTYLDMDYQVQIQEEFEESSEILLKEFLKPEKFMKVCEALEHGDVEWSSRGPPNKRFYEKAEESKLPEILKECMKLFHSEALFLLLSNFTGLKLHFLAPSEEDEMNDKKEAEAADITEEGTSHSPPEPENNQTAISNNSQQSNEQTDPEPEENETKKESSVPTCQGELRRWKTGHYTLIHDHSKAEFALDLILYCGCEGWEPEYGGFTSYIAKGEDEELLTVNPESNSLALVYRDRETLKFVKHINHRSLEQKKTFPNRTGFWDFSFIYYE.

The 106-residue stretch at 134–239 (DLESTIDMSC…RLSISGWFHG (106 aa)) folds into the Fe2OG dioxygenase domain. Residues His-155 and Asp-157 each contribute to the Fe cation site. Tyr-169 contacts 2-oxoglutarate. His-218 serves as a coordination point for Fe cation. Residue Arg-230 participates in 2-oxoglutarate binding. The segment at 373-435 (EDEMNDKKEA…TKKESSVPTC (63 aa)) is disordered. Positions 400–416 (ENNQTAISNNSQQSNEQ) are enriched in polar residues.

The protein belongs to the TPA1 family. In terms of assembly, monomer. Requires Fe(2+) as cofactor. L-ascorbate serves as cofactor.

It is found in the cytoplasm. It localises to the nucleus. The enzyme catalyses [ribosomal protein uS12]-L-proline + 2-oxoglutarate + O2 = [ribosomal protein uS12]-(3S)-3-hydroxy-L-proline + succinate + CO2. In terms of biological role, prolyl 3-hydroxylase that catalyzes 3-hydroxylation of 'Pro-62' of small ribosomal subunit uS12 (RPS23), thereby regulating protein translation termination efficiency. Involved in stress granule formation. This Pongo abelii (Sumatran orangutan) protein is Prolyl 3-hydroxylase OGFOD1 (OGFOD1).